The sequence spans 510 residues: Maturase K (510 aa).

Belongs to the intron maturase 2 family. MatK subfamily.

Its subcellular location is the plastid. The protein resides in the chloroplast. In terms of biological role, usually encoded in the trnK tRNA gene intron. Probably assists in splicing its own and other chloroplast group II introns. The polypeptide is Maturase K (Populus nigra (Lombardy poplar)).